A 296-amino-acid chain; its full sequence is Thiamine-monophosphate kinase (296 aa).

Asp-32, Thr-46, and Asp-48 together coordinate Mg(2+). Asp-55 lines the substrate pocket. Residues Asp-76 and Asp-121 each coordinate Mg(2+). Residues 120-121 (GD) and Arg-144 contribute to the ATP site. Asp-206 is a Mg(2+) binding site. Ser-208 is an ATP binding site. Asp-209 is a binding site for Mg(2+). Tyr-293 lines the substrate pocket.

It belongs to the thiamine-monophosphate kinase family.

It catalyses the reaction thiamine phosphate + ATP = thiamine diphosphate + ADP. Its pathway is cofactor biosynthesis; thiamine diphosphate biosynthesis; thiamine diphosphate from thiamine phosphate: step 1/1. Catalyzes the ATP-dependent phosphorylation of thiamine-monophosphate (TMP) to form thiamine-pyrophosphate (TPP), the active form of vitamin B1. The protein is Thiamine-monophosphate kinase of Archaeoglobus fulgidus (strain ATCC 49558 / DSM 4304 / JCM 9628 / NBRC 100126 / VC-16).